Reading from the N-terminus, the 482-residue chain is FAD-linked oxidoreductase alt4 (482 aa).

The 159-residue stretch at 53–211 folds into the FAD-binding PCMH-type domain; sequence ERPTYLAIVD…LEATFQVYPQ (159 aa).

This sequence belongs to the oxygen-dependent FAD-linked oxidoreductase family. FAD serves as cofactor.

The protein operates within secondary metabolite biosynthesis. Its function is as follows. FAD-linked oxidoreductase; part of the gene cluster that mediates the biosynthesis of alternapyrone derivatives. Alternapyrone is a decaketide with octa-methylation from methionine on every C2 unit except the third unit. All the domains in the polyketide synthase alt5 are apparently involved in alternapyrone synthesis, that is, the 8 CMeT, 7 KR, 7 DH, and 4 ER reactions in the 9 KS-mediated condensation steps required for alternapyrone synthesis. the alternapyrone produced by alt5 might be intensively modified by cytochrome P450 monooxygenases alt1, alt2 and alt3 and FAD-dependent oxidoreductase alt4 present in the alt gene cluster. This Alternaria solani protein is FAD-linked oxidoreductase alt4.